A 1240-amino-acid chain; its full sequence is MEASQGLAEVETLSPQLAESYLRYVQEAKEAAKNGDLEESLKLFNLAKDIFPTKKVMSRIQKLQEALEQLAEEEDDDEFIDVCSSGLLLYRELYEKLFEHQKEGIAFLYSLYKDGRKGGILADDMGLGKTVQIIAFLSGMFDASLVNHVLLIMPTNLINTWVNEFAKWTPGMRVKTFHGSSKSERTRSLTRIQQRNGVVITTYQMLLNNWQQLASFNGQAFVWDYVILDEAHKIKSASTKSAVCARAIPASNRLLLTGTPVQNNLQELWSLFDFACQGSLLGTLKTFKMEYEHPIIRAREKDATPGEKALGLKISENLMEIIKPYFLRRTKEEVQTKKADNPEARLGEKNPAGEAICDMFSLARKNDLIVWIRLLPLQEEIYRKFVSLDHIKELLMETRSPLAELGVLKKLCDHPRLLSARACRLLNLGTATFSAQDENEQEDVSNMNSIDHLPDKTLIQESGKMIFLMSLLERLQDEGHQTLVFSQSIKILNIIERLLKNKHFKTLRIDGTVTHLWEREKRIQLFQQNKEYSVFLLTTQVGGVGLTLTAATRVVIFDPSWNPATDAQAVDRVYRIGQKENVVVYRLITCGTVEEKIYRRQVFKDSLIRQTTGEKKNPFRYFTKQELKELFTVGDLQKSATQMQLQCLHAAQRRSDEKLDEHIAYLHLLGIAGISDHDLMFTRDLSVKEELDMLEDSQYIHQRVQKAQFLVESESQNTVQRQTTGIEETWLKAQEFPSQQKKKGTEFNKPQPQPSRLLTKPTQVEAISSQMASITICDQSAESEPQEHSEVHDVTSLQGSHHFNSTSDAGTIASLPQGAESIGEVSTDSLLSPAKGFAAENDAMQKKGLQASPGQEAPSENLGSFHYLPRESSKASLGPNLDLQDSVVLYHRSPTANENQNLESDVPMIEISDDLSEPPSALQGAQAIEAQLELKEDDPLKSPPQYACDFNLFLEDSADTRQNLSSKFLEHVEKEKSLQSPAANSRAKSALTLSLDSSPKSDEESEVISVKTKSKTRRILSDDEDEDEEDAFKGSHTNSINISPFPFSSVKQFDASTPQSGSNPSRRFFSPKTPGEVNTSLHSRRSLASRRSLINVVLDDVEDMEERLDNSSEEESEPGLSEENNEEEALACTEEQPSGATLASGNKSSNLTMSEPTSPAPQSSPCAPEPSSSDPMPDPPQDLAVEAGNDYESLVARGKELKECGKIQEALNCLVKALDIKSADPEVMLMTLSLYKQLNI.

At serine 14 the chain carries Phosphoserine. The stretch at 21-54 is one TPR 1 repeat; it reads YLRYVQEAKEAAKNGDLEESLKLFNLAKDIFPTK. Positions 110–278 constitute a Helicase ATP-binding domain; it reads SLYKDGRKGG…WSLFDFACQG (169 aa). 123–130 is a binding site for ATP; sequence DDMGLGKT. A DEAH box motif is present at residues 229-232; the sequence is DEAH. Positions 467-631 constitute a Helicase C-terminal domain; the sequence is FLMSLLERLQ…FTKQELKELF (165 aa). The disordered stretch occupies residues 736–760; it reads FPSQQKKKGTEFNKPQPQPSRLLTK. Positions 748–760 are enriched in polar residues; that stretch reads NKPQPQPSRLLTK. Phosphoserine occurs at positions 755 and 773. Residues 778–813 are disordered; the sequence is DQSAESEPQEHSEVHDVTSLQGSHHFNSTSDAGTIA. Residues 795 to 809 are compositionally biased toward polar residues; sequence TSLQGSHHFNSTSDA. Serine 821 bears the Phosphoserine mark. The segment at 845-879 is disordered; sequence QKKGLQASPGQEAPSENLGSFHYLPRESSKASLGP. Serine 966, serine 998, serine 1001, and serine 1021 each carry phosphoserine. The tract at residues 974 to 1085 is disordered; sequence KEKSLQSPAA…EVNTSLHSRR (112 aa). The span at 978 to 998 shows a compositional bias: polar residues; it reads LQSPAANSRAKSALTLSLDSS. Polar residues predominate over residues 1049–1065; it reads SVKQFDASTPQSGSNPS. The residue at position 1057 (threonine 1057) is a Phosphothreonine. Serine 1092 and serine 1112 each carry phosphoserine. Acidic residues predominate over residues 1104 to 1117; sequence MEERLDNSSEEESE. A disordered region spans residues 1104-1185; the sequence is MEERLDNSSE…MPDPPQDLAV (82 aa). Residues 1135–1165 show a composition bias toward polar residues; it reads EQPSGATLASGNKSSNLTMSEPTSPAPQSSP. A Phosphoserine modification is found at serine 1172. A TPR 2 repeat occupies 1191-1224; that stretch reads YESLVARGKELKECGKIQEALNCLVKALDIKSAD.

Belongs to the SNF2/RAD54 helicase family. Interacts with PLK1, which phosphorylates it. Both proteins are mutually dependent on each other for correct subcellular localization. Interacts (via N-terminal TPR repeat) with BEND3 (via BEN domains 1 and 3); the interaction is direct. In terms of processing, phosphorylation by PLK1 prevents the association with chromosome arms and restricts its localization to the kinetochore-centromere region. As to expression, expressed mainly in the neural tube and heart of 10.5 dpc embryo. Significantly down-regulated after alcohol exposure in embryonic brain and heart, but not in embryonic kidney, liver, or lung.

The protein localises to the chromosome. Its subcellular location is the centromere. It localises to the kinetochore. It catalyses the reaction ATP + H2O = ADP + phosphate + H(+). Its function is as follows. DNA helicase that acts as a tension sensor that associates with catenated DNA which is stretched under tension until it is resolved during anaphase. Functions as ATP-dependent DNA translocase. Can promote Holliday junction branch migration (in vitro). The polypeptide is DNA excision repair protein ERCC-6-like (Ercc6l) (Mus musculus (Mouse)).